The primary structure comprises 62 residues: Cytotoxin 7 (62 aa).

A signal peptide spans 1–2; the sequence is YT. 4 disulfides stabilise this stretch: cysteine 5-cysteine 23, cysteine 16-cysteine 40, cysteine 44-cysteine 55, and cysteine 56-cysteine 61.

The protein belongs to the three-finger toxin family. Short-chain subfamily. Type IA cytotoxin sub-subfamily. Monomer in solution; Homodimer and oligomer in the presence of negatively charged lipids forming a pore with a size ranging between 20 and 30 Angstroms. Expressed by the venom gland.

The protein resides in the secreted. It localises to the target cell membrane. Its function is as follows. Shows cytolytic activity on many different cells by forming pore in lipid membranes. In vivo, increases heart rate or kills the animal by cardiac arrest. In addition, it binds to heparin with high affinity, interacts with Kv channel-interacting protein 1 (KCNIP1) in a calcium-independent manner, and binds to integrin alpha-V/beta-3 (ITGAV/ITGB3) with moderate affinity. The polypeptide is Cytotoxin 7 (Naja sputatrix (Malayan spitting cobra)).